A 337-amino-acid polypeptide reads, in one-letter code: Protein-arginine kinase (337 aa).

Residues 8-239 (VVLSSRIRLA…KQIISSERRA (232 aa)) enclose the Phosphagen kinase C-terminal domain. ATP contacts are provided by residues 11–15 (SSRIR), histidine 76, arginine 110, 161–165 (RASVM), and 192–197 (RGIYGE). Positions 321-326 (RDVKRA) match the RDXXRA motif of the pArg binding pocket involved in allosteric regulation motif.

This sequence belongs to the ATP:guanido phosphotransferase family.

The enzyme catalyses L-arginyl-[protein] + ATP = N(omega)-phospho-L-arginyl-[protein] + ADP + H(+). Its activity is regulated as follows. Appears to be allosterically activated by the binding of pArg-containing polypeptides to the pArg-binding pocket localized in the C-terminal domain of McsB. Functionally, catalyzes the specific phosphorylation of arginine residues in proteins. The sequence is that of Protein-arginine kinase from Caldanaerobacter subterraneus subsp. tengcongensis (strain DSM 15242 / JCM 11007 / NBRC 100824 / MB4) (Thermoanaerobacter tengcongensis).